Consider the following 421-residue polypeptide: Exopolysaccharide production protein ExoF (421 aa).

A signal peptide spans 1 to 31 (MQSNRRSGKSAGSRMVSCFTRLALLAALAAS).

It is found in the periplasm. Its pathway is glycan metabolism; exopolysaccharide biosynthesis. Functionally, involved in succinoglycan (EPS I) synthesis. Needed for the addition of the first sugar (galactose) to the isoprenoid carrier. This chain is Exopolysaccharide production protein ExoF (exoF), found in Rhizobium meliloti (strain 1021) (Ensifer meliloti).